Consider the following 243-residue polypeptide: uncharacterized protein (243 aa).

Residues 55 to 75 (IILIILLTIFMVISTLVIAFV) traverse the membrane as a helical segment.

It localises to the membrane. This is an uncharacterized protein from Rickettsia prowazekii (strain Madrid E).